A 158-amino-acid polypeptide reads, in one-letter code: SsrA-binding protein (158 aa).

The protein belongs to the SmpB family.

The protein localises to the cytoplasm. Functionally, required for rescue of stalled ribosomes mediated by trans-translation. Binds to transfer-messenger RNA (tmRNA), required for stable association of tmRNA with ribosomes. tmRNA and SmpB together mimic tRNA shape, replacing the anticodon stem-loop with SmpB. tmRNA is encoded by the ssrA gene; the 2 termini fold to resemble tRNA(Ala) and it encodes a 'tag peptide', a short internal open reading frame. During trans-translation Ala-aminoacylated tmRNA acts like a tRNA, entering the A-site of stalled ribosomes, displacing the stalled mRNA. The ribosome then switches to translate the ORF on the tmRNA; the nascent peptide is terminated with the 'tag peptide' encoded by the tmRNA and targeted for degradation. The ribosome is freed to recommence translation, which seems to be the essential function of trans-translation. The sequence is that of SsrA-binding protein from Roseiflexus sp. (strain RS-1).